The primary structure comprises 471 residues: Alpha-galactosidase 6 (471 aa).

The first 18 residues, 1 to 18 (MFAFYFLTACISLKGVFG), serve as a signal peptide directing secretion. A disulfide bond links Cys-42 and Cys-74. Substrate-binding residues include Asp-72 and Asp-73. N-linked (GlcNAc...) asparagine glycosylation occurs at Asn-105. Cysteines 121 and 151 form a disulfide. Residue Lys-147 participates in substrate binding. The active-site Nucleophile is Asp-149. An N-linked (GlcNAc...) asparagine glycan is attached at Asn-175. Arg-205 provides a ligand contact to substrate. Asp-209 acts as the Proton donor in catalysis. 2 disulfides stabilise this stretch: Cys-221–Cys-237 and Cys-223–Cys-230. Gln-251 contributes to the substrate binding site. 6 N-linked (GlcNAc...) asparagine glycosylation sites follow: Asn-270, Asn-370, Asn-403, Asn-422, Asn-435, and Asn-454.

It belongs to the glycosyl hydrolase 27 family. In terms of assembly, homotetramer.

The protein resides in the secreted. It catalyses the reaction Hydrolysis of terminal, non-reducing alpha-D-galactose residues in alpha-D-galactosides, including galactose oligosaccharides, galactomannans and galactolipids.. The protein is Alpha-galactosidase 6 (MEL6) of Saccharomyces cerevisiae (Baker's yeast).